The primary structure comprises 354 residues: Galactose-1-phosphate uridylyltransferase (354 aa).

The interval 36–72 is disordered; it reads TVTTSEVRRDPLLGDSAPSRLAPQGRTYHPPADQCPL. Zn(2+)-binding residues include cysteine 70, cysteine 73, and histidine 114. Position 154 (asparagine 154) interacts with UDP-alpha-D-glucose. Histidine 165 provides a ligand contact to Zn(2+). Histidine 167 acts as the Tele-UMP-histidine intermediate in catalysis. Glutamine 169 and glutamine 332 together coordinate UDP-alpha-D-glucose.

This sequence belongs to the galactose-1-phosphate uridylyltransferase type 1 family. The cofactor is Zn(2+).

It catalyses the reaction alpha-D-galactose 1-phosphate + UDP-alpha-D-glucose = alpha-D-glucose 1-phosphate + UDP-alpha-D-galactose. It functions in the pathway carbohydrate metabolism; galactose metabolism. This Streptomyces lividans protein is Galactose-1-phosphate uridylyltransferase (galT).